Reading from the N-terminus, the 1085-residue chain is Protein IFH1 (1085 aa).

Disordered stretches follow at residues 1–251 (MAGK…QQAL), 283–302 (KNKE…VMLG), 457–493 (SKLK…TSNV), 507–622 (DDEN…DSSV), 676–700 (VDDE…IGSK), and 747–774 (QLRE…GDEL). Composition is skewed to polar residues over residues 9-18 (KSTINHSTHS) and 39-48 (RQSPPTLSTT). Residues 54–66 (SLIYSSESSLSDV) show a composition bias toward low complexity. A compositionally biased stretch (basic residues) spans 76-85 (NPHKIKRKAK). Positions 120 to 165 (DGEESENEEEESEEEEEDDDEDDDDDDDDGSDSDSDSETSSDDENI) are enriched in acidic residues. Over residues 184–197 (AMNTNSNTLYSSRE) the composition is skewed to polar residues. Phosphoserine is present on S208. The span at 209 to 239 (PKKENEEEQKEEKEKEKEEQQKQQESNKKEV) shows a compositional bias: basic and acidic residues. Residues 241 to 251 (GSGTTTTQQAL) are compositionally biased toward polar residues. Residues 283-297 (KNKENNGNEEDKLDS) show a composition bias toward basic and acidic residues. Residues 474–483 (QRRKLYKKTQ) are compositionally biased toward basic residues. Polar residues predominate over residues 484 to 493 (KPSTRTTSNV). The segment covering 513 to 524 (HKSKKGRHKSGK) has biased composition (basic residues). The span at 546–557 (STHSTVLNSGKY) shows a compositional bias: polar residues. Residues 584-599 (ETSHDADTDEELRALD) show a composition bias toward basic and acidic residues. Composition is skewed to acidic residues over residues 607–620 (TELD…DDDS) and 676–686 (VDDESTDEDDN). Positions 747-764 (QLREQHQRAQTPDVKREG) are enriched in basic and acidic residues. Phosphoserine is present on S1041.

Belongs to the IFH1 family.

It localises to the nucleus. Its function is as follows. Transcriptional coactivator that together with FHL1 regulates the expression of rRNA and ribosomal protein genes. Its activity is negatively regulated by environmental stress. In Saccharomyces cerevisiae (strain ATCC 204508 / S288c) (Baker's yeast), this protein is Protein IFH1 (IFH1).